The chain runs to 306 residues: 2-phosphoglycerate kinase (306 aa).

Residues 1–90 (MIMVQGEVSG…LWRKIRQCKE (90 aa)) form the ATP-cone domain.

The protein belongs to the 2-phosphoglycerate kinase family. The cofactor is a divalent metal cation.

The enzyme catalyses (2R)-2-phosphoglycerate + ATP = (2R)-2,3-bisphosphoglycerate + ADP + H(+). Its pathway is thermoadapter biosynthesis; cyclic 2,3-diphosphoglycerate biosynthesis; cyclic 2,3-diphosphoglycerate from 2-phospho-D-glycerate: step 1/2. In terms of biological role, catalyzes the phosphorylation of 2-phosphoglycerate to 2,3-diphosphoglycerate. Involved in the biosynthesis of cyclic 2,3-bisphosphoglycerate, a thermoprotectant. The chain is 2-phosphoglycerate kinase from Methanothermobacter thermautotrophicus (strain ATCC 29096 / DSM 1053 / JCM 10044 / NBRC 100330 / Delta H) (Methanobacterium thermoautotrophicum).